A 175-amino-acid polypeptide reads, in one-letter code: Translation initiation factor IF-3 (175 aa).

The protein belongs to the IF-3 family. Monomer.

It localises to the cytoplasm. Functionally, IF-3 binds to the 30S ribosomal subunit and shifts the equilibrium between 70S ribosomes and their 50S and 30S subunits in favor of the free subunits, thus enhancing the availability of 30S subunits on which protein synthesis initiation begins. The chain is Translation initiation factor IF-3 from Staphylococcus aureus (strain NCTC 8325 / PS 47).